A 136-amino-acid chain; its full sequence is Acidic phospholipase A2 CC-PLA2-2 (136 aa).

The signal sequence occupies residues Met1 to Gly16. 7 disulfides stabilise this stretch: Cys42-Cys129, Cys44-Cys60, Cys59-Cys109, Cys65-Cys136, Cys66-Cys102, Cys73-Cys95, and Cys90-Cys100. Residues Tyr43, Gly45, and Gly47 each coordinate Ca(2+). His63 is a catalytic residue. Asp64 lines the Ca(2+) pocket. The active site involves Asp103.

This sequence belongs to the phospholipase A2 family. Group II subfamily. D49 sub-subfamily. Ca(2+) serves as cofactor. Post-translationally, glycosylated (2.5%). Expressed by the venom gland.

The protein resides in the secreted. It carries out the reaction a 1,2-diacyl-sn-glycero-3-phosphocholine + H2O = a 1-acyl-sn-glycero-3-phosphocholine + a fatty acid + H(+). Its function is as follows. Snake venom phospholipase A2 that inhibits blood coagulation and platelet aggregation induced by ADP and arachidonic acid. Inhibits tumor cell adhesion and migration in a dose-dependent manner. Abolishes the attachment of human brain microvascular endothelial cells (HBMEC) to fibrinogen (IC(50)=0.2 uM) and dramatically reduces its adhesion to fibronectin (IC(50)=0.3 uM), whereas no effect is observed on type I collagen, vitronectin or laminin 1. Also blocks the cell migration toward fibronectin and fibrinogen. These effects are not dependent of the catalytic activity, but are mediated by alpha-5/beta-1 (ITGA5/ITGB1) and alpha-v-containing (ITGAV) integrins. Also shows anti-angiogenic activity in chicken chorioallantoix membrane assay. Has a relatively high enzymatic activity. PLA2 catalyzes the calcium-dependent hydrolysis of the 2-acyl groups in 3-sn-phosphoglycerides. The sequence is that of Acidic phospholipase A2 CC-PLA2-2 from Cerastes cerastes (Horned desert viper).